The sequence spans 362 residues: 3-dehydroquinate synthase (362 aa).

Residues 71–76 (DGEKYK), 105–109 (GVIGD), 129–130 (TT), lysine 142, and lysine 151 each bind NAD(+). The Zn(2+) site is built by glutamate 184, histidine 248, and histidine 265.

The protein belongs to the sugar phosphate cyclases superfamily. Dehydroquinate synthase family. It depends on Co(2+) as a cofactor. Requires Zn(2+) as cofactor. NAD(+) is required as a cofactor.

It localises to the cytoplasm. The catalysed reaction is 7-phospho-2-dehydro-3-deoxy-D-arabino-heptonate = 3-dehydroquinate + phosphate. It participates in metabolic intermediate biosynthesis; chorismate biosynthesis; chorismate from D-erythrose 4-phosphate and phosphoenolpyruvate: step 2/7. Functionally, catalyzes the conversion of 3-deoxy-D-arabino-heptulosonate 7-phosphate (DAHP) to dehydroquinate (DHQ). In Hamiltonella defensa subsp. Acyrthosiphon pisum (strain 5AT), this protein is 3-dehydroquinate synthase.